Reading from the N-terminus, the 274-residue chain is MPTVNSVRRAGNTDEETDPVTMLTAYDAPTASVVDDAGVDMILVGDSVGNAKLGYDTTLPVSVDEIASATGAVARATADAVVVADMPFLSFGADETESVRNAGRMLKEEDADAVKLESGPHTVSLTETLTSLGIPVMAHLGLTPQHVNQLGGYFRQGTDQDSAERMLDLARDHEAAGAFALVLEHVPANVAADITDAIDIPTIGIGAGPDTDGQVLVISDVIGMSERSPPFSKQFGDVNREMAAAVDDYVDAVESGSFPAAEHSHVADDVDDVY.

The Mg(2+) site is built by Asp46 and Asp85. 3-methyl-2-oxobutanoate is bound by residues 46–47 (DS), Asp85, and Lys115. Mg(2+) is bound at residue Glu117. Glu184 (proton acceptor) is an active-site residue.

Belongs to the PanB family. Homodecamer; pentamer of dimers. Mg(2+) is required as a cofactor.

The protein resides in the cytoplasm. It catalyses the reaction 3-methyl-2-oxobutanoate + (6R)-5,10-methylene-5,6,7,8-tetrahydrofolate + H2O = 2-dehydropantoate + (6S)-5,6,7,8-tetrahydrofolate. It participates in cofactor biosynthesis; coenzyme A biosynthesis. Its function is as follows. Catalyzes the reversible reaction in which hydroxymethyl group from 5,10-methylenetetrahydrofolate is transferred onto alpha-ketoisovalerate to form ketopantoate. The chain is 3-methyl-2-oxobutanoate hydroxymethyltransferase from Halobacterium salinarum (strain ATCC 29341 / DSM 671 / R1).